A 127-amino-acid chain; its full sequence is UPF0102 protein ERGA_CDS_00540 (127 aa).

It belongs to the UPF0102 family.

This chain is UPF0102 protein ERGA_CDS_00540, found in Ehrlichia ruminantium (strain Gardel).